Here is a 136-residue protein sequence, read N- to C-terminus: Holo-[acyl-carrier-protein] synthase (136 aa).

Asp-8 and Glu-58 together coordinate Mg(2+).

This sequence belongs to the P-Pant transferase superfamily. AcpS family. Requires Mg(2+) as cofactor.

It localises to the cytoplasm. The enzyme catalyses apo-[ACP] + CoA = holo-[ACP] + adenosine 3',5'-bisphosphate + H(+). Transfers the 4'-phosphopantetheine moiety from coenzyme A to a Ser of acyl-carrier-protein. The chain is Holo-[acyl-carrier-protein] synthase from Leuconostoc mesenteroides subsp. mesenteroides (strain ATCC 8293 / DSM 20343 / BCRC 11652 / CCM 1803 / JCM 6124 / NCDO 523 / NBRC 100496 / NCIMB 8023 / NCTC 12954 / NRRL B-1118 / 37Y).